The sequence spans 374 residues: Flagellar P-ring protein (374 aa).

The N-terminal stretch at 1–29 is a signal peptide; the sequence is MPGVGISRIVRIAVAALVALAPLMTPAHA.

This sequence belongs to the FlgI family. The basal body constitutes a major portion of the flagellar organelle and consists of four rings (L,P,S, and M) mounted on a central rod.

It is found in the periplasm. It localises to the bacterial flagellum basal body. Assembles around the rod to form the L-ring and probably protects the motor/basal body from shearing forces during rotation. This chain is Flagellar P-ring protein, found in Nitrobacter hamburgensis (strain DSM 10229 / NCIMB 13809 / X14).